We begin with the raw amino-acid sequence, 1204 residues long: DNA-directed RNA polymerase subunit beta' (1204 aa).

The Zn(2+) site is built by Cys-60, Cys-62, Cys-75, and Cys-78. Mg(2+) contacts are provided by Asp-449, Asp-451, and Asp-453. Cys-819, Cys-893, Cys-900, and Cys-903 together coordinate Zn(2+).

The protein belongs to the RNA polymerase beta' chain family. In terms of assembly, the RNAP catalytic core consists of 2 alpha, 1 beta, 1 beta' and 1 omega subunit. When a sigma factor is associated with the core the holoenzyme is formed, which can initiate transcription. Mg(2+) is required as a cofactor. It depends on Zn(2+) as a cofactor.

It catalyses the reaction RNA(n) + a ribonucleoside 5'-triphosphate = RNA(n+1) + diphosphate. In terms of biological role, DNA-dependent RNA polymerase catalyzes the transcription of DNA into RNA using the four ribonucleoside triphosphates as substrates. This chain is DNA-directed RNA polymerase subunit beta', found in Bacillus cytotoxicus (strain DSM 22905 / CIP 110041 / 391-98 / NVH 391-98).